The sequence spans 353 residues: 3-dehydroquinate synthase (353 aa).

Residues 62–67 (DGEQYK), 96–100 (GVIGD), 120–121 (TT), Lys133, and Lys142 contribute to the NAD(+) site. Zn(2+) contacts are provided by Glu175, His236, and His253.

It belongs to the sugar phosphate cyclases superfamily. Dehydroquinate synthase family. NAD(+) is required as a cofactor. It depends on Co(2+) as a cofactor. The cofactor is Zn(2+).

The protein localises to the cytoplasm. The catalysed reaction is 7-phospho-2-dehydro-3-deoxy-D-arabino-heptonate = 3-dehydroquinate + phosphate. It functions in the pathway metabolic intermediate biosynthesis; chorismate biosynthesis; chorismate from D-erythrose 4-phosphate and phosphoenolpyruvate: step 2/7. Catalyzes the conversion of 3-deoxy-D-arabino-heptulosonate 7-phosphate (DAHP) to dehydroquinate (DHQ). The sequence is that of 3-dehydroquinate synthase from Helicobacter hepaticus (strain ATCC 51449 / 3B1).